A 407-amino-acid polypeptide reads, in one-letter code: E3 ubiquitin-protein ligase TRIM13 (407 aa).

The RING-type zinc-finger motif lies at 10–58 (CPICCSLFDDPRVLPCSHNFCKKCLEGLLEGNVRNSLWRPSPFKCPTCR). A B box-type zinc finger spans residues 89–131 (PKMPVCKGHLGQPLNIFCVTDMQLICGICATRGEHTKHVFSSI). 4 residues coordinate Zn(2+): cysteine 94, histidine 97, cysteine 117, and histidine 123. Positions 172–200 (LQLLTKDSDKVKEFFEKLQHTLDQKKNEI) form a coiled coil. Residues 316-336 (LLLMMVVLLGLLIFFGPTVFL) form a helical membrane-spanning segment.

This sequence belongs to the TRIM/RBCC family. Interacts (via C-terminal domain) with VCP. Interacts with AKT1; the interaction ubiquitinates AKT1 and leads to its proteasomal degradation. Interacts with MDM2; the interaction ubiquitinates AKT1 and leads to its proteasomal degradation. Interacts with p62/SQSTM1. Interacts with TRAF6. Interacts with IKBKG/NEMO. Post-translationally, auto-ubiquitinated; requires the RING-type zinc finger. Auto-polyubiquitination leads to proteasomal degradation.

It is found in the endoplasmic reticulum membrane. It catalyses the reaction S-ubiquitinyl-[E2 ubiquitin-conjugating enzyme]-L-cysteine + [acceptor protein]-L-lysine = [E2 ubiquitin-conjugating enzyme]-L-cysteine + N(6)-ubiquitinyl-[acceptor protein]-L-lysine.. Its pathway is protein modification; protein ubiquitination. Endoplasmic reticulum (ER) membrane anchored E3 ligase involved in the retrotranslocation and turnover of membrane and secretory proteins from the ER through a set of processes named ER-associated degradation (ERAD). This process acts on misfolded proteins as well as in the regulated degradation of correctly folded proteins. Enhances ionizing radiation-induced p53/TP53 stability and apoptosis via ubiquitinating MDM2 and AKT1 and decreasing AKT1 kinase activity through MDM2 and AKT1 proteasomal degradation. Regulates ER stress-induced autophagy, and may act as a tumor suppressor. Also plays a role in innate immune response by stimulating NF-kappa-B activity in the TLR2 signaling pathway. Ubiquitinates TRAF6 via the 'Lys-29'-linked polyubiquitination chain resulting in NF-kappa-B activation. Participates as well in T-cell receptor-mediated NF-kappa-B activation. In the presence of TNF, modulates the IKK complex by regulating IKBKG/NEMO ubiquitination leading to the repression of NF-kappa-B. In Mus musculus (Mouse), this protein is E3 ubiquitin-protein ligase TRIM13 (Trim13).